We begin with the raw amino-acid sequence, 165 residues long: Coronafacic acid dehydratase (165 aa).

Histidine 62 is an active-site residue.

It belongs to the thioester dehydratase family.

It functions in the pathway phytotoxin biosynthesis; coronatine biosynthesis. The sequence is that of Coronafacic acid dehydratase (cfa2) from Pseudomonas savastanoi pv. glycinea (Pseudomonas syringae pv. glycinea).